A 424-amino-acid polypeptide reads, in one-letter code: Dihydroorotase (424 aa).

His-61 and His-63 together coordinate Zn(2+). Residues 63–65 (HLR) and Asn-95 each bind substrate. Residues Asp-153, His-180, and His-233 each contribute to the Zn(2+) site. A substrate-binding site is contributed by Asn-279. Asp-306 is a binding site for Zn(2+). The active site involves Asp-306. Residue His-310 coordinates substrate.

Belongs to the metallo-dependent hydrolases superfamily. DHOase family. Class I DHOase subfamily. Zn(2+) is required as a cofactor.

The catalysed reaction is (S)-dihydroorotate + H2O = N-carbamoyl-L-aspartate + H(+). Its pathway is pyrimidine metabolism; UMP biosynthesis via de novo pathway; (S)-dihydroorotate from bicarbonate: step 3/3. Catalyzes the reversible cyclization of carbamoyl aspartate to dihydroorotate. This is Dihydroorotase from Pelobacter propionicus (strain DSM 2379 / NBRC 103807 / OttBd1).